The following is a 506-amino-acid chain: UDP-N-acetylmuramoylalanine--D-glutamate ligase (506 aa).

128–134 (GTNGKTT) contributes to the ATP binding site.

Belongs to the MurCDEF family.

The protein localises to the cytoplasm. The enzyme catalyses UDP-N-acetyl-alpha-D-muramoyl-L-alanine + D-glutamate + ATP = UDP-N-acetyl-alpha-D-muramoyl-L-alanyl-D-glutamate + ADP + phosphate + H(+). It participates in cell wall biogenesis; peptidoglycan biosynthesis. Functionally, cell wall formation. Catalyzes the addition of glutamate to the nucleotide precursor UDP-N-acetylmuramoyl-L-alanine (UMA). The protein is UDP-N-acetylmuramoylalanine--D-glutamate ligase of Albidiferax ferrireducens (strain ATCC BAA-621 / DSM 15236 / T118) (Rhodoferax ferrireducens).